Reading from the N-terminus, the 695-residue chain is UvrABC system protein B (695 aa).

Residues 31 to 414 (EGIESGLSFQ…EIQRSGQIAE (384 aa)) form the Helicase ATP-binding domain. 44-51 (GVTGSGKT) is a binding site for ATP. A Beta-hairpin motif is present at residues 97 to 120 (YYDYYQPEAYVPSRDLFIEKDSSI). Residues 435–601 (QVDDLMSEVS…GVNKRIKDLI (167 aa)) form the Helicase C-terminal domain. Positions 632 to 667 (AKEIQRLEKSMLEAARNMEFEQAAQYRDEIKNLRSK) constitute a UVR domain.

Belongs to the UvrB family. Forms a heterotetramer with UvrA during the search for lesions. Interacts with UvrC in an incision complex.

The protein localises to the cytoplasm. Its function is as follows. The UvrABC repair system catalyzes the recognition and processing of DNA lesions. A damage recognition complex composed of 2 UvrA and 2 UvrB subunits scans DNA for abnormalities. Upon binding of the UvrA(2)B(2) complex to a putative damaged site, the DNA wraps around one UvrB monomer. DNA wrap is dependent on ATP binding by UvrB and probably causes local melting of the DNA helix, facilitating insertion of UvrB beta-hairpin between the DNA strands. Then UvrB probes one DNA strand for the presence of a lesion. If a lesion is found the UvrA subunits dissociate and the UvrB-DNA preincision complex is formed. This complex is subsequently bound by UvrC and the second UvrB is released. If no lesion is found, the DNA wraps around the other UvrB subunit that will check the other stand for damage. The sequence is that of UvrABC system protein B from Nitrosomonas europaea (strain ATCC 19718 / CIP 103999 / KCTC 2705 / NBRC 14298).